The sequence spans 392 residues: Chaperone protein DnaJ 1 (392 aa).

The 64-residue stretch at 4-67 (DYYEILGVSH…QKRAVFDRGG (64 aa)) folds into the J domain. The CR-type zinc finger occupies 134–216 (GVTKSLEVDT…CSGEGRVRTT (83 aa)). Zn(2+) is bound by residues C147, C150, C164, C167, C190, C193, C204, and C207. CXXCXGXG motif repeat units follow at residues 147–154 (CPKCQGKG), 164–171 (CDTCQGRG), 190–197 (CPTCHGYG), and 204–211 (CQECSGEG). Residues 367–392 (ETNASASVEKSGGRGMFSRIKEAFGG) are disordered.

Belongs to the DnaJ family. As to quaternary structure, homodimer. It depends on Zn(2+) as a cofactor.

It is found in the cytoplasm. Its function is as follows. Participates actively in the response to hyperosmotic and heat shock by preventing the aggregation of stress-denatured proteins and by disaggregating proteins, also in an autonomous, DnaK-independent fashion. Unfolded proteins bind initially to DnaJ; upon interaction with the DnaJ-bound protein, DnaK hydrolyzes its bound ATP, resulting in the formation of a stable complex. GrpE releases ADP from DnaK; ATP binding to DnaK triggers the release of the substrate protein, thus completing the reaction cycle. Several rounds of ATP-dependent interactions between DnaJ, DnaK and GrpE are required for fully efficient folding. Also involved, together with DnaK and GrpE, in the DNA replication of plasmids through activation of initiation proteins. This Cutibacterium acnes (strain DSM 16379 / KPA171202) (Propionibacterium acnes) protein is Chaperone protein DnaJ 1.